The chain runs to 241 residues: Small ribosomal subunit protein eS4 (241 aa).

Positions 43 to 105 constitute an S4 RNA-binding domain; sequence IPLVMVLRDI…INKTFRVLQD (63 aa).

The protein belongs to the eukaryotic ribosomal protein eS4 family.

The chain is Small ribosomal subunit protein eS4 from Methanosphaera stadtmanae (strain ATCC 43021 / DSM 3091 / JCM 11832 / MCB-3).